A 205-amino-acid chain; its full sequence is Small ribosomal subunit protein uS4 (205 aa).

The span at 1 to 16 (MSKRETTKYKIDRRMG) shows a compositional bias: basic and acidic residues. Positions 1–46 (MSKRETTKYKIDRRMGENIWGRPKSPVNRRDYGPGQHGQRRKGKLS) are disordered. An S4 RNA-binding domain is found at 94–157 (SRLDAVIYRA…KQLVLVLESV (64 aa)).

This sequence belongs to the universal ribosomal protein uS4 family. Part of the 30S ribosomal subunit. Contacts protein S5. The interaction surface between S4 and S5 is involved in control of translational fidelity.

One of the primary rRNA binding proteins, it binds directly to 16S rRNA where it nucleates assembly of the body of the 30S subunit. Its function is as follows. With S5 and S12 plays an important role in translational accuracy. The sequence is that of Small ribosomal subunit protein uS4 from Bartonella henselae (strain ATCC 49882 / DSM 28221 / CCUG 30454 / Houston 1) (Rochalimaea henselae).